We begin with the raw amino-acid sequence, 403 residues long: Acetylornithine/succinyldiaminopimelate aminotransferase (403 aa).

Pyridoxal 5'-phosphate contacts are provided by residues 107 to 108 (GA) and F140. R143 contacts N(2)-acetyl-L-ornithine. Residue 225 to 228 (DEVQ) participates in pyridoxal 5'-phosphate binding. K254 is modified (N6-(pyridoxal phosphate)lysine). N(2)-acetyl-L-ornithine is bound at residue T282. T283 contacts pyridoxal 5'-phosphate.

It belongs to the class-III pyridoxal-phosphate-dependent aminotransferase family. ArgD subfamily. As to quaternary structure, homodimer. It depends on pyridoxal 5'-phosphate as a cofactor.

It localises to the cytoplasm. It catalyses the reaction N(2)-acetyl-L-ornithine + 2-oxoglutarate = N-acetyl-L-glutamate 5-semialdehyde + L-glutamate. The catalysed reaction is N-succinyl-(2S,6S)-2,6-diaminopimelate + 2-oxoglutarate = (S)-2-succinylamino-6-oxoheptanedioate + L-glutamate. It participates in amino-acid biosynthesis; L-arginine biosynthesis; N(2)-acetyl-L-ornithine from L-glutamate: step 4/4. The protein operates within amino-acid biosynthesis; L-lysine biosynthesis via DAP pathway; LL-2,6-diaminopimelate from (S)-tetrahydrodipicolinate (succinylase route): step 2/3. In terms of biological role, involved in both the arginine and lysine biosynthetic pathways. The polypeptide is Acetylornithine/succinyldiaminopimelate aminotransferase (Photorhabdus laumondii subsp. laumondii (strain DSM 15139 / CIP 105565 / TT01) (Photorhabdus luminescens subsp. laumondii)).